The following is a 473-amino-acid chain: Cannabinoid receptor 1 (473 aa).

The Extracellular portion of the chain corresponds to 1 to 121 (MKSILDGLAD…LNPSQQLAIA (121 aa)). The tract at residues 2–23 (KSILDGLADTTFRTITTDLLYV) is required for mitochondrial localization. N-linked (GlcNAc...) asparagine glycosylation is found at asparagine 78 and asparagine 84. Residues 122–142 (VLSLTLGTFTVLENLLVLCVI) traverse the membrane as a helical segment. At 143 to 155 (LHSRSLRCRPSYH) the chain is on the cytoplasmic side. A helical membrane pass occupies residues 156-176 (FIGSLAVADLLGSVIFVYSFV). The Extracellular segment spans residues 177-188 (DFHVFHRKDSPN). Residues 189-209 (VFLFKLGGVTASFTASVGSLF) traverse the membrane as a helical segment. Residues 210–233 (LTAIDRYISIHRPLAYKRIVTRPK) lie on the Cytoplasmic side of the membrane. Residues 234–254 (AVVAFCLMWTIAIVIAVLPLL) form a helical membrane-spanning segment. Over 255–278 (GWNCKKLQSVCSDIFPLIDETYLM) the chain is Extracellular. Residues 279 to 299 (FWIGVTSVLLLFIVYAYMYIL) form a helical membrane-spanning segment. The Cytoplasmic portion of the chain corresponds to 300–345 (WKAHSHAVRMIQRGTQKSIIIHTSEDGKVQVTRPDQARMDIRLAKT). Residues 346 to 366 (LVLILVVLIICWGPLLAIMVY) form a helical membrane-spanning segment. At 367–378 (DVFGKMNKLIKT) the chain is on the extracellular side. A helical transmembrane segment spans residues 379–399 (VFAFCSMLCLLNSTVNPIIYA). Over 400-473 (LRSKDLRHAF…VSTDTSAEAL (74 aa)) the chain is Cytoplasmic. Cysteine 416 carries S-palmitoyl cysteine lipidation. Phosphoserine occurs at positions 426 and 430.

Belongs to the G-protein coupled receptor 1 family. Interacts (via C-terminus) with CNRIP1. Associates with G protein alpha subunits, including G(i) alpha-1/GNAI1, G(i) alpha-3/GNAI3 and G(o)-alpha/GNAO1; palmitoylation is important for interaction with GNAI3 and GNAO1. Post-translationally, palmitoylation at Cys-416 is important for recruitment at both plasma membrane and lipid rafts and association with G protein alpha subunits. As to expression, expressed in brain neurons (at protein level). Detected throughout the striatum, cortex and hippocampus, with highest levels in the lateral striatum. In rostral brain regions, high expression levels in the dorsal lateral striatum, while in the caudal brain regions, high levels are observed in the ventral lateral striatum. Expressed in neurons. In the hypothalamus, expressed in both GABAergic and glutamatergic presynaptic terminals of POMC neurons (at protein level). Expressed in striated muscles, including skeletal muscles (gastrocnemius and rectus abdominis) and myocardium (at protein level). Expressed in the liver, with highest levels in Kupffer cells and lower levels in endothelial cells as well as hepatocytes, particularly in perivascular areas (at protein level). The hepatic expression level is up-regulated in obese mice compared to lean animals.

Its subcellular location is the cell membrane. It localises to the mitochondrion outer membrane. It is found in the cell projection. The protein localises to the axon. The protein resides in the presynapse. Its activity is regulated as follows. Hemopressin, a peptide derived from hemoglobin subunit alpha (HBA1 and/or HBA2), acts as an antagonist peptide: hemopressin-binding efficiently blocks cannabinoid receptor CNR1 and subsequent signaling. G-protein coupled receptor for cannabinoids, including endocannabinoids (eCBs), such as N-arachidonoylethanolamide (also called anandamide or AEA) and 2-arachidonoylglycerol (2-AG). Mediates many cannabinoid-induced effects, acting, among others, on food intake, memory loss, gastrointestinal motility, catalepsy, ambulatory activity, anxiety, chronic pain. Signaling typically involves reduction in cyclic AMP. In the hypothalamus, may have a dual effect on mitochondrial respiration depending upon the agonist dose and possibly upon the cell type. Increases respiration at low doses, while decreases respiration at high doses. At high doses, CNR1 signal transduction involves G-protein alpha-i protein activation and subsequent inhibition of mitochondrial soluble adenylate cyclase, decrease in cyclic AMP concentration, inhibition of protein kinase A (PKA)-dependent phosphorylation of specific subunits of the mitochondrial electron transport system, including NDUFS2. In the hypothalamus, inhibits leptin-induced reactive oxygen species (ROS) formation and mediates cannabinoid-induced increase in SREBF1 and FASN gene expression. In response to cannabinoids, drives the release of orexigenic beta-endorphin, but not that of melanocyte-stimulating hormone alpha/alpha-MSH, from hypothalamic POMC neurons, hence promoting food intake. In the hippocampus, regulates cellular respiration and energy production in response to cannabinoids. Involved in cannabinoid-dependent depolarization-induced suppression of inhibition (DSI), a process in which depolarization of CA1 postsynaptic pyramidal neurons mobilizes eCBs, which retrogradely activate presynaptic CB1 receptors, transiently decreasing GABAergic inhibitory neurotransmission. Also reduces excitatory synaptic transmission. In superior cervical ganglions and cerebral vascular smooth muscle cells, inhibits voltage-gated Ca(2+) channels in a constitutive, as well as agonist-dependent manner. In cerebral vascular smooth muscle cells, cannabinoid-induced inhibition of voltage-gated Ca(2+) channels leads to vasodilation and decreased vascular tone. Induces leptin production in adipocytes and reduces LRP2-mediated leptin clearance in the kidney, hence participating in hyperleptinemia. In adipose tissue, CNR1 signaling leads to increased expression of SREBF1, ACACA and FASN genes. In the liver, activation by endocannabinoids leads to increased de novo lipogenesis and reduced fatty acid catabolism, associated with increased expression of SREBF1/SREBP-1, GCK, ACACA, ACACB and FASN genes. May also affect de novo cholesterol synthesis and HDL-cholesteryl ether uptake. Peripherally modulates energy metabolism. In high carbohydrate diet-induced obesity, may decrease the expression of mitochondrial dihydrolipoyl dehydrogenase/DLD in striated muscles, as well as that of selected glucose/ pyruvate metabolic enzymes, hence affecting energy expenditure through mitochondrial metabolism. In response to cannabinoid anandamide, elicits a pro-inflammatory response in macrophages, which involves NLRP3 inflammasome activation and IL1B and IL18 secretion. In macrophages infiltrating pancreatic islets, this process may participate in the progression of type-2 diabetes and associated loss of pancreatic beta-cells. The sequence is that of Cannabinoid receptor 1 (Cnr1) from Mus musculus (Mouse).